Consider the following 507-residue polypeptide: RNA-binding protein MEX3B (507 aa).

A disordered region spans residues 1 to 22; sequence MPSSLFADMERNGSGGGGGETL. 2 KH domains span residues 59-120 and 155-216; these read MTEC…RREI and QTTI…REEI. 2 disordered regions span residues 256–279 and 426–450; these read NQSS…LGSA and SSSS…GMRR. A compositionally biased stretch (low complexity) spans 426-446; sequence SSSSSSSSSSSSSSSSSSSSS. Residues 456–496 form an RING-type zinc finger; the sequence is CSICFESEVIAALVPCGHNLFCMECANRICEKNQPQCPVCH.

Its subcellular location is the cytoplasm. It localises to the nucleus. The protein resides in the cytoplasmic granule. It is found in the P-body. RNA-binding protein. May be involved in post-transcriptional regulatory mechanisms. The polypeptide is RNA-binding protein MEX3B (mex3b) (Xenopus laevis (African clawed frog)).